The sequence spans 800 residues: MSRRRAHDTEDEGYDHRRNKRRRVSENQEIEDRLESLILRVGERSTSSVESNLEGLVSVLEADLGTFRLKILRILSDCAVRMPEKCTVYTTLVGLLNAKNYKFGGEFVDHMVKTFKESLKMCRWDAARYSLRFLADLVNCHVISATSLLQLLDTMIDVSNEDTVPQVRRDWFVFAVLSTLPWVGRDLYEKKESALESLLLRIEVYLNKRSKKHHNALRVWSSDAPHPQEEYLDCLWAQIRKLRQDNWAEKHIPRPYLVFDSILCEALQHNLPTIVPPPHHDNFEYPMPWVVYRMFDYTDCPDGPNLPGAHSIERFLIEEHLHHIIETYHHERKDCAAQLLSFPYKHKIPLEYCIVEVVFAELFHMPTPRYLDICYGSILIELCKLQPATLPQVLAQATEILFMRIDSMNTSCFDRFVNWFSYHLSNFKFTWSWDEWDSCLLLDGEHPRPKFIQEVLQKCLRLSYHQRITEMMPTTYAKLIPLTPVPNYKYANEEAANLPGTTVAHQLVVAIRQKCTPEEVVNILKDIPNSGYSGEEMSDGSFNALKIDVFVQTLLNLGSKSFSHSFAAISKFHSVFRALAETEEAQICILHNIFELWSSHQQMMVVLIDKLLKLQIVDCSAVATWIFSKEMTGEFTKLYLWEILHLTIKKMNKHVIKLNTELSEAKEKLAKADSSSSDSEDDSSHKRKKPITHADKPSEEVVERMEEKLEAANVNQKRLFLIVFQRFIMILSEHLLRSDTDGRDPDTDWYRWTIGRLQQVFLMHHEQVQKYSSTLETLLFTSDLDTHILEVFQQFVALRA.

The disordered stretch occupies residues 1–26 (MSRRRAHDTEDEGYDHRRNKRRRVSE). Thr9 bears the Phosphothreonine mark. The MIF4G domain occupies 31 to 243 (EDRLESLILR…CLWAQIRKLR (213 aa)). A disordered region spans residues 669–700 (LAKADSSSSDSEDDSSHKRKKPITHADKPSEE).

The protein belongs to the NCBP1 family. Component of the nuclear cap-binding complex (CBC), a heterodimer composed of Cbp80 and Cbp20 that interacts with m7GpppG-capped RNA.

Its subcellular location is the nucleus. Component of the cap-binding complex (CBC), which binds cotranscriptionally to the 5'-cap of pre-mRNAs and is involved in various processes such as pre-mRNA splicing and RNA-mediated gene silencing (RNAi). The CBC complex is involved in miRNA-mediated RNA interference via its interaction with Ars2 and is required for primary microRNAs (miRNAs) processing. Also involved in innate immunity via the short interfering RNAs (siRNAs) processing machinery by restricting the viral RNA production. In the CBC complex, Cbp80 does not bind directly capped RNAs (m7GpppG-capped RNA) but is required to stabilize the movement of the N-terminal loop of Cbp20 and lock the CBC into a high affinity cap-binding state with the cap structure. This Drosophila melanogaster (Fruit fly) protein is Nuclear cap-binding protein subunit 1 (Cbp80).